A 125-amino-acid polypeptide reads, in one-letter code: Succinate dehydrogenase assembly factor 3, mitochondrial (125 aa).

The N-terminal 30 residues, 1–30 (MPGRHVSRVRALYKRVLQLHRVLPPDLKSL), are a transit peptide targeting the mitochondrion.

This sequence belongs to the complex I LYR family. SDHAF3 subfamily. Interacts with SDHB within an SDHA-SDHB subcomplex.

The protein localises to the mitochondrion matrix. Functionally, plays an essential role in the assembly of succinate dehydrogenase (SDH), an enzyme complex (also referred to as respiratory complex II) that is a component of both the tricarboxylic acid (TCA) cycle and the mitochondrial electron transport chain, and which couples the oxidation of succinate to fumarate with the reduction of ubiquinone (coenzyme Q) to ubiquinol. Promotes maturation of the iron-sulfur protein subunit SDHB of the SDH catalytic dimer, protecting it from the deleterious effects of oxidants. May act together with SDHAF1. This is Succinate dehydrogenase assembly factor 3, mitochondrial from Homo sapiens (Human).